Reading from the N-terminus, the 229-residue chain is Ras-related protein rab-39 (229 aa).

73-77 (DTAGQ) is a binding site for GTP. Residues cysteine 227 and cysteine 229 are each lipidated (S-geranylgeranyl cysteine). Cysteine 229 carries the post-translational modification Cysteine methyl ester.

This sequence belongs to the small GTPase superfamily. Rab family. As to quaternary structure, interacts (in GTP-bound form) with Ras association domain-containing protein rsf-1.

It is found in the cell membrane. Its subcellular location is the cytoplasmic vesicle membrane. The protein localises to the golgi apparatus. Functionally, small GTPases Rab involved in autophagy. The small GTPases Rab are key regulators of intracellular membrane trafficking, from the formation of transport vesicles to their fusion with membranes. Rabs cycle between an inactive GDP-bound form and an active GTP-bound form that is able to recruit to membranes different sets of downstream effectors directly responsible for vesicle formation, movement, tethering and fusion. Involved in positively regulating the oxidative stress response, perhaps in concert with the Ras association domain-containing protein rsf-1. This is Ras-related protein rab-39 from Caenorhabditis elegans.